The chain runs to 267 residues: Phosphate import ATP-binding protein PstB (267 aa).

The ABC transporter domain maps to 21 to 262; sequence IAIRNLEFYY…PSKQQTEDYI (242 aa). Residue 53 to 60 coordinates ATP; that stretch reads GPSGCGKS.

This sequence belongs to the ABC transporter superfamily. Phosphate importer (TC 3.A.1.7) family. In terms of assembly, the complex is composed of two ATP-binding proteins (PstB), two transmembrane proteins (PstC and PstA) and a solute-binding protein (PstS).

Its subcellular location is the cell inner membrane. The enzyme catalyses phosphate(out) + ATP + H2O = ADP + 2 phosphate(in) + H(+). Functionally, part of the ABC transporter complex PstSACB involved in phosphate import. Responsible for energy coupling to the transport system. The protein is Phosphate import ATP-binding protein PstB of Xylella fastidiosa (strain 9a5c).